A 251-amino-acid polypeptide reads, in one-letter code: Flagellar basal-body rod protein FlgF (251 aa).

Belongs to the flagella basal body rod proteins family. As to quaternary structure, the basal body constitutes a major portion of the flagellar organelle and consists of five rings (E,L,P,S, and M) mounted on a central rod. The rod consists of about 26 subunits of FlgG in the distal portion, and FlgB, FlgC and FlgF are thought to build up the proximal portion of the rod with about 6 subunits each.

The protein resides in the bacterial flagellum basal body. The chain is Flagellar basal-body rod protein FlgF (flgF) from Salmonella typhimurium (strain LT2 / SGSC1412 / ATCC 700720).